Here is a 248-residue protein sequence, read N- to C-terminus: Probable transcriptional regulatory protein P9303_05381 (248 aa).

This sequence belongs to the TACO1 family.

The protein localises to the cytoplasm. The sequence is that of Probable transcriptional regulatory protein P9303_05381 from Prochlorococcus marinus (strain MIT 9303).